The sequence spans 367 residues: MNTTANPSNIIVGLSGGVDSSVTAALLKQQGYQVRGVFMQNWEDDDNDEYCSIKQDSFDAIAVADIVGIDIDIVNFAAQYKDKVFAYFLQEYSAGRTPNPDVLCNAEIKFKCFLDYAVGQGADTIATGHYARKEVRNGVHYLLKGLDQNKDQSYFLYRLKPFQLERAIFPLGGLEKPEVRRLAAEFNLPTAAKKDSTGICFIGERPFREFLQKYLPTDNGKMVTPEGKTVGEHVGLMFYTLGQRKGLGIGGGGEPWFVAAKDLTKNELMVVQGHDHPLLYTRSLVMNDLSFTLPERPKEGHYTCKTRYRMADAPCELRYLDDETVELVFDEPQWAVTPGQSAVLYDGDICLGGGIIQSTDKPVIITR.

ATP contacts are provided by residues 13–20 (GLSGGVDS) and Met39. The interaction with target base in tRNA stretch occupies residues 99–101 (NPD). Catalysis depends on Cys104, which acts as the Nucleophile. A disulfide bond links Cys104 and Cys200. Gly128 is a binding site for ATP. The interval 150–152 (KDQ) is interaction with tRNA. Residue Cys200 is the Cysteine persulfide intermediate of the active site. Residues 307–308 (RY) form an interaction with tRNA region.

This sequence belongs to the MnmA/TRMU family.

The protein resides in the cytoplasm. It carries out the reaction S-sulfanyl-L-cysteinyl-[protein] + uridine(34) in tRNA + AH2 + ATP = 2-thiouridine(34) in tRNA + L-cysteinyl-[protein] + A + AMP + diphosphate + H(+). Its function is as follows. Catalyzes the 2-thiolation of uridine at the wobble position (U34) of tRNA, leading to the formation of s(2)U34. This Neisseria meningitidis serogroup A / serotype 4A (strain DSM 15465 / Z2491) protein is tRNA-specific 2-thiouridylase MnmA.